The following is a 496-amino-acid chain: Proline--tRNA ligase (496 aa).

This sequence belongs to the class-II aminoacyl-tRNA synthetase family. ProS type 3 subfamily. As to quaternary structure, homodimer.

The protein resides in the cytoplasm. It catalyses the reaction tRNA(Pro) + L-proline + ATP = L-prolyl-tRNA(Pro) + AMP + diphosphate. In terms of biological role, catalyzes the attachment of proline to tRNA(Pro) in a two-step reaction: proline is first activated by ATP to form Pro-AMP and then transferred to the acceptor end of tRNA(Pro). The protein is Proline--tRNA ligase of Phocaeicola vulgatus (strain ATCC 8482 / DSM 1447 / JCM 5826 / CCUG 4940 / NBRC 14291 / NCTC 11154) (Bacteroides vulgatus).